The sequence spans 477 residues: Bifunctional protein HldE (477 aa).

Positions 1–318 (MKLSMPRFDQ…RAIQREEGSE (318 aa)) are ribokinase. 194–197 (NLSE) is an ATP binding site. Asp263 is an active-site residue. Positions 343-477 (FTNGCFDILH…EKIRKTDKAE (135 aa)) are cytidylyltransferase.

It in the N-terminal section; belongs to the carbohydrate kinase PfkB family. The protein in the C-terminal section; belongs to the cytidylyltransferase family. In terms of assembly, homodimer.

It catalyses the reaction D-glycero-beta-D-manno-heptose 7-phosphate + ATP = D-glycero-beta-D-manno-heptose 1,7-bisphosphate + ADP + H(+). The enzyme catalyses D-glycero-beta-D-manno-heptose 1-phosphate + ATP + H(+) = ADP-D-glycero-beta-D-manno-heptose + diphosphate. Its pathway is nucleotide-sugar biosynthesis; ADP-L-glycero-beta-D-manno-heptose biosynthesis; ADP-L-glycero-beta-D-manno-heptose from D-glycero-beta-D-manno-heptose 7-phosphate: step 1/4. It participates in nucleotide-sugar biosynthesis; ADP-L-glycero-beta-D-manno-heptose biosynthesis; ADP-L-glycero-beta-D-manno-heptose from D-glycero-beta-D-manno-heptose 7-phosphate: step 3/4. Functionally, catalyzes the phosphorylation of D-glycero-D-manno-heptose 7-phosphate at the C-1 position to selectively form D-glycero-beta-D-manno-heptose-1,7-bisphosphate. In terms of biological role, catalyzes the ADP transfer from ATP to D-glycero-beta-D-manno-heptose 1-phosphate, yielding ADP-D-glycero-beta-D-manno-heptose. This is Bifunctional protein HldE from Pseudomonas fluorescens (strain ATCC BAA-477 / NRRL B-23932 / Pf-5).